The following is a 256-amino-acid chain: Myb family transcription factor MPH1 (256 aa).

The HTH myb-type domain occupies 14-74; the sequence is RSEVPRMRWT…HLQMYRSGSS (61 aa). The segment at residues 45 to 70 is a DNA-binding region (H-T-H motif); it reads PKRILQLMGVKGVSISHIKSHLQMYR.

In terms of tissue distribution, highly expressed in the pulvinus and stem nodes. Expressed in the plumule of germinating seeds, coleoptile, leaves, internodes, leave sheaths, spikes and roots.

It localises to the nucleus. In terms of biological role, probable transcription factor involved in the regulation of plant height by elongating internode cell length. Involved in the positive regulation of grain yield. May be involved in the regulation of genes related to cell elongation and cell wall synthesis, which are associated with plant height and yield phenotypes. Plays a role in tolerance to cadmium stress. In Oryza sativa subsp. japonica (Rice), this protein is Myb family transcription factor MPH1.